A 159-amino-acid chain; its full sequence is Small ribosomal subunit protein uS4 (159 aa).

Positions 106–158 (RRLQTIVYRMGLAKSIYHARQLIVHGHIAVAGRRVSSPGFLVPRELEDKISLI) constitute an S4 RNA-binding domain.

The protein belongs to the universal ribosomal protein uS4 family. As to quaternary structure, part of the 30S ribosomal subunit. Contacts protein S5. The interaction surface between S4 and S5 is involved in control of translational fidelity.

One of the primary rRNA binding proteins, it binds directly to 16S rRNA where it nucleates assembly of the body of the 30S subunit. Functionally, with S5 and S12 plays an important role in translational accuracy. The chain is Small ribosomal subunit protein uS4 from Pyrobaculum neutrophilum (strain DSM 2338 / JCM 9278 / NBRC 100436 / V24Sta) (Thermoproteus neutrophilus).